The primary structure comprises 231 residues: Phosphoglycolate phosphatase (231 aa).

Aspartate 9 functions as the Nucleophile in the catalytic mechanism. Positions 9 and 11 each coordinate Mg(2+). Residue lysine 154 participates in substrate binding. The Mg(2+) site is built by aspartate 177 and aspartate 181.

Belongs to the archaeal SPP-like hydrolase family. Requires Mg(2+) as cofactor.

It carries out the reaction 2-phosphoglycolate + H2O = glycolate + phosphate. Its function is as follows. Catalyzes the dephosphorylation of 2-phosphoglycolate. The chain is Phosphoglycolate phosphatase from Pyrococcus furiosus (strain ATCC 43587 / DSM 3638 / JCM 8422 / Vc1).